We begin with the raw amino-acid sequence, 1240 residues long: Ubiquitin carboxyl-terminal hydrolase 36 (1240 aa).

2 disordered regions span residues Ala-37 to Asn-56 and Ser-100 to Ala-144. 2 stretches are compositionally biased toward low complexity: residues Ser-47–Asn-56 and Asn-101–Gly-132. In terms of domain architecture, USP spans Thr-202–Asp-512. Cys-211 (nucleophile) is an active-site residue. His-471 acts as the Proton acceptor in catalysis. A disordered region spans residues Ala-637–Val-705. Residues Lys-639 to Lys-649 show a composition bias toward polar residues. Low complexity predominate over residues Gln-650–His-662. The span at Ser-668–Asn-680 shows a compositional bias: acidic residues. The residue at position 715 (Thr-715) is a Phosphothreonine. 4 disordered regions span residues Tyr-723–Thr-818, Tyr-831–Leu-998, Asp-1076–Ser-1163, and Arg-1198–Ser-1240. 2 positions are modified to phosphoserine: Ser-725 and Ser-727. A compositionally biased stretch (low complexity) spans Gln-733–Gln-744. Residues Ser-759–Gln-769 show a composition bias toward acidic residues. Residues Asn-794 to Lys-815 are compositionally biased toward low complexity. The span at Asp-843–Ala-859 shows a compositional bias: acidic residues. Residues Thr-869 to Ser-879 are compositionally biased toward low complexity. Positions Leu-880–Gly-890 are enriched in polar residues. Ser-895 carries the post-translational modification Phosphoserine. Phosphothreonine is present on Thr-898. Ser-901 is modified (phosphoserine). The segment covering Asp-918–Ala-941 has biased composition (acidic residues). Residues Leu-976–Arg-988 show a composition bias toward polar residues. Positions Asp-1076–Asn-1103 are enriched in low complexity. Positions Ala-1111 to Asp-1120 are enriched in basic and acidic residues. Positions Gln-1231 to Ser-1240 are enriched in low complexity.

This sequence belongs to the peptidase C19 family. As to quaternary structure, interacts with atms/PAF1, but not with CycT.

The protein localises to the nucleus. The protein resides in the nucleolus. The catalysed reaction is Thiol-dependent hydrolysis of ester, thioester, amide, peptide and isopeptide bonds formed by the C-terminal Gly of ubiquitin (a 76-residue protein attached to proteins as an intracellular targeting signal).. Functionally, required for maintaining multiple types of adult stem cells, including male and female germline, epithelial follicle cell and intestinal stem cells. May function as a transcriptional repressor by continually deubiquiting histone H2B at the promoters of genes critical for cellular differentiation, thereby preventing histone H3 'Lys-4' trimethylation (H3K4). Controls selective autophagy activation by ubiquitinated proteins. This Drosophila grimshawi (Hawaiian fruit fly) protein is Ubiquitin carboxyl-terminal hydrolase 36 (Usp36).